We begin with the raw amino-acid sequence, 644 residues long: Pesticidal crystal protein Cry3Aa (644 aa).

Over residues 1-13 (MNPNNRSEHDTIK) the composition is skewed to basic and acidic residues. Positions 1 to 20 (MNPNNRSEHDTIKTTENNEV) are disordered. Positions 1–57 (MNPNNRSEHDTIKTTENNEVPTNHVQYPLAETPNPTLEDLNYKEFLRMTADNNTEAL) are cleaved as a propeptide — removed in mature form.

It belongs to the delta endotoxin family.

Its function is as follows. Promotes colloidosmotic lysis by binding to the midgut epithelial cells of Coleoptera. The protein is Pesticidal crystal protein Cry3Aa (cry3Aa) of Bacillus thuringiensis subsp. san diego.